The chain runs to 295 residues: MMRILVTNPAPMTCLPPWIIIDPWLQQWLAEDIGRGDWSTQGLGLQHRGQARWVAKENGVIAGLPMAARIFQLLDPSMEFQVLAGEGQAVTASTVVATMAGNLGSLLTGERVALNLVMGLSGIATMTRQYVQAIADYPTRFVDTRKTTPGLRVLEKYASRLGGAMNHRLGLDDAVMVKDNHIQAAGSITKAVQTLRQNLPYPLAIEVETSNLEEVQEAIATQVEIIMLDNMGTDTMATAVKLIRQANPLIRIEASGNVTLANLTAIASTGVDFISSSAPITRSPWLDLSMQIVRN.

Residues Arg-111, 144-146 (TRK), Arg-168, Lys-178, Glu-208, Asp-229, and 255-257 (SGN) contribute to the substrate site.

Belongs to the NadC/ModD family. Hexamer formed by 3 homodimers.

The enzyme catalyses nicotinate beta-D-ribonucleotide + CO2 + diphosphate = quinolinate + 5-phospho-alpha-D-ribose 1-diphosphate + 2 H(+). It participates in cofactor biosynthesis; NAD(+) biosynthesis; nicotinate D-ribonucleotide from quinolinate: step 1/1. Functionally, involved in the catabolism of quinolinic acid (QA). This is Probable nicotinate-nucleotide pyrophosphorylase [carboxylating] (nadC) from Synechocystis sp. (strain ATCC 27184 / PCC 6803 / Kazusa).